An 816-amino-acid chain; its full sequence is H(+)/Cl(-) exchange transporter 5 (816 aa).

The Cytoplasmic segment spans residues 1 to 124 (MAMWQGAMDN…WALIHSVSDA (124 aa)). 2 helical membrane passes run 125 to 162 (FSGWLLMLLIGLLSGSLAGLIDISAHWMTDLKEGICTG) and 208 to 231 (VNYFMYVLWALLFAFLAVSLVKAF). The short motif at 237–241 (GSGIP) is the Selectivity filter part_1 element. S238 lines the chloride pocket. Positions 240 to 247 (IPEIKTIL) form an intramembrane region, helical. 2 helical membrane-spanning segments follow: residues 256 to 275 (LGKWTLVIKTITLVLAVSSG) and 281 to 300 (EGPLVHVACCCGNILCHCFN). Positions 279 to 283 (GKEGP) match the Selectivity filter part_2 motif. 2 consecutive intramembrane regions (helical) follow at residues 312 to 324 (VLSAAAAAGVSVA) and 328 to 336 (PIGGVLFSL). The next 5 membrane-spanning stretches (helical) occupy residues 348 to 366 (LWRSFFAALVAAFTLRSIN), 389 to 414 (LVPFIVLGIFGGLWGALFIRTNIAWC), 422 to 442 (LGKYPVVEVLIVTAITAILAF), 498 to 518 (MWQLALTLILKIVITIFTFGM), and 523 to 542 (GLFIPSMAVGAIAGRLLGVG). Residues 523 to 527 (GLFIP) carry the Selectivity filter part_3 motif. Position 525 (F525) interacts with chloride. The segment at residues 570–584 (GLYAMVGAAACLGGV) is an intramembrane region (helical). Positions 585 to 587 (TRM) form an intramembrane region, note=Loop between two helices. The helical intramembrane region spans 588-599 (TVSLVVIMFELT). Residues 600 to 604 (GGLEY) constitute an intramembrane region (note=Loop between two helices). A helical transmembrane segment spans residues 605-622 (IVPLMAAAMTSKWVADAL). The Cytoplasmic portion of the chain corresponds to 623-816 (GREGIYDAHI…NQDPDSILFN (194 aa)). Residue Y628 participates in chloride binding. CBS domains follow at residues 656–720 (MKPR…ARKK) and 752–812 (ILDL…DPDS). ATP contacts are provided by residues T666, 687-689 (YSG), and 794-797 (TKKD).

Belongs to the chloride channel (TC 2.A.49) family. ClC-5/CLCN5 subfamily. As to quaternary structure, interacts with NEDD4 and NEDD4L. Post-translationally, ubiquitinated by NEDD4L in the presence of albumin; which promotes endocytosis and proteasomal degradation. In terms of tissue distribution, kidney specific.

It localises to the golgi apparatus membrane. It is found in the endosome membrane. The protein resides in the cell membrane. The enzyme catalyses 2 chloride(in) + H(+)(out) = 2 chloride(out) + H(+)(in). Functionally, proton-coupled chloride transporter. Functions as antiport system and exchanges chloride ions against protons. Important for normal acidification of the endosome lumen. May play an important role in renal tubular function. The CLC channel family contains both chloride channels and proton-coupled anion transporters that exchange chloride or another anion for protons. The absence of conserved gating glutamate residues is typical for family members that function as channels. The protein is H(+)/Cl(-) exchange transporter 5 (Clcn5) of Mus musculus (Mouse).